The primary structure comprises 496 residues: uncharacterized protein (496 aa).

The next 12 helical transmembrane spans lie at 33–53, 89–109, 127–147, 154–174, 193–213, 247–267, 285–305, 320–340, 355–375, 382–402, 411–431, and 455–475; these read FLKG…LIFA, LNFL…YTLI, PWFV…FTFF, VFNL…YEIF, LIIA…TPLV, IILI…NTNF, LWFI…VFAY, LWVY…YMVF, LLNL…VTLF, SLIN…IYIF, LLVL…IVGF, and VQIM…YLTI.

The protein resides in the cell membrane. This is an uncharacterized protein from Ureaplasma parvum serovar 3 (strain ATCC 700970).